The chain runs to 520 residues: Bifunctional purine biosynthesis protein PurH (520 aa).

An MGS-like domain is found at 1–150 (MSDDRKAIKR…KNHPSVAVVV (150 aa)).

The protein belongs to the PurH family.

It catalyses the reaction (6R)-10-formyltetrahydrofolate + 5-amino-1-(5-phospho-beta-D-ribosyl)imidazole-4-carboxamide = 5-formamido-1-(5-phospho-D-ribosyl)imidazole-4-carboxamide + (6S)-5,6,7,8-tetrahydrofolate. The enzyme catalyses IMP + H2O = 5-formamido-1-(5-phospho-D-ribosyl)imidazole-4-carboxamide. It participates in purine metabolism; IMP biosynthesis via de novo pathway; 5-formamido-1-(5-phospho-D-ribosyl)imidazole-4-carboxamide from 5-amino-1-(5-phospho-D-ribosyl)imidazole-4-carboxamide (10-formyl THF route): step 1/1. Its pathway is purine metabolism; IMP biosynthesis via de novo pathway; IMP from 5-formamido-1-(5-phospho-D-ribosyl)imidazole-4-carboxamide: step 1/1. This is Bifunctional purine biosynthesis protein PurH from Corynebacterium glutamicum (strain R).